A 174-amino-acid polypeptide reads, in one-letter code: Myeloid-derived growth factor (174 aa).

An N-terminal signal peptide occupies residues 1–32 (MAAPSGRRNGSGGANLWVSLLLAAAALRPVET).

Belongs to the MYDGF family.

The protein localises to the secreted. Its subcellular location is the endoplasmic reticulum-Golgi intermediate compartment. The protein resides in the endoplasmic reticulum. It localises to the golgi apparatus. In terms of biological role, bone marrow-derived monocyte and paracrine-acting protein that promotes cardiac myocyte survival and adaptive angiogenesis for cardiac protection and/or repair after myocardial infarction (MI). Stimulates endothelial cell proliferation through a MAPK1/3-, STAT3- and CCND1-mediated signaling pathway. Inhibits cardiac myocyte apoptosis in a PI3K/AKT-dependent signaling pathway. This chain is Myeloid-derived growth factor, found in Bos taurus (Bovine).